A 216-amino-acid chain; its full sequence is MTETIDPDLIERGRKTFAGDWHFIWASPSIETLPPMDGLEVAFAGRSNVGKSSLINALTGRNALARTSHTPGRTQELIFFDGPPGAGLRLVDMPGYGYAAASKAKVASWTSLIHKFLQGRATLARVYVLIDGRHGLKDVDLDILKTLDKAAVSYQIVLTKADQVKAAELAERVDATRTALAKHPAAFPELLTTSSRTGAGMPELRAAMIRLLDERR.

One can recognise an EngB-type G domain in the interval 37-214; sequence DGLEVAFAGR…RAAMIRLLDE (178 aa). Residues 45 to 52, 72 to 76, 92 to 95, 159 to 162, and 193 to 195 contribute to the GTP site; these read GRSNVGKS, GRTQE, DMPG, TKAD, and TSS. Residues Ser52 and Thr74 each coordinate Mg(2+).

This sequence belongs to the TRAFAC class TrmE-Era-EngA-EngB-Septin-like GTPase superfamily. EngB GTPase family. The cofactor is Mg(2+).

Necessary for normal cell division and for the maintenance of normal septation. This is Probable GTP-binding protein EngB from Rhodopseudomonas palustris (strain HaA2).